Here is a 255-residue protein sequence, read N- to C-terminus: Hydroxyacylglutathione hydrolase (255 aa).

Zn(2+)-binding residues include His55, His57, Asp59, His60, His113, Asp132, and His170.

The protein belongs to the metallo-beta-lactamase superfamily. Glyoxalase II family. In terms of assembly, monomer. Zn(2+) serves as cofactor.

It catalyses the reaction an S-(2-hydroxyacyl)glutathione + H2O = a 2-hydroxy carboxylate + glutathione + H(+). It participates in secondary metabolite metabolism; methylglyoxal degradation; (R)-lactate from methylglyoxal: step 2/2. Its function is as follows. Thiolesterase that catalyzes the hydrolysis of S-D-lactoyl-glutathione to form glutathione and D-lactic acid. This Methylobacterium sp. (strain 4-46) protein is Hydroxyacylglutathione hydrolase.